A 62-amino-acid polypeptide reads, in one-letter code: Photosystem II reaction center protein H (62 aa).

The chain crosses the membrane as a helical span at residues 30 to 50 (PVMAGIGFMLLIFLVTILQIY).

Belongs to the PsbH family. PSII is composed of 1 copy each of membrane proteins PsbA, PsbB, PsbC, PsbD, PsbE, PsbF, PsbH, PsbI, PsbJ, PsbK, PsbL, PsbM, PsbT, PsbX, PsbY, Psb30/Ycf12, peripheral proteins PsbO, CyanoQ (PsbQ), PsbU, PsbV and a large number of cofactors. It forms dimeric complexes.

It is found in the cellular thylakoid membrane. One of the components of the core complex of photosystem II (PSII), required for its stability and/or assembly. PSII is a light-driven water:plastoquinone oxidoreductase that uses light energy to abstract electrons from H(2)O, generating O(2) and a proton gradient subsequently used for ATP formation. It consists of a core antenna complex that captures photons, and an electron transfer chain that converts photonic excitation into a charge separation. In Prochlorococcus marinus (strain MIT 9303), this protein is Photosystem II reaction center protein H.